We begin with the raw amino-acid sequence, 195 residues long: Interferon omega-2 (195 aa).

The N-terminal stretch at 1 to 23 (MALLPSLLTALVVYELWPCGALG) is a signal peptide. Disulfide bonds link cysteine 24/cysteine 122 and cysteine 52/cysteine 162. An N-linked (GlcNAc...) asparagine glycan is attached at asparagine 101.

The protein belongs to the alpha/beta interferon family.

The protein resides in the secreted. This is Interferon omega-2 from Equus caballus (Horse).